A 120-amino-acid chain; its full sequence is Large ribosomal subunit protein bL17 (120 aa).

Belongs to the bacterial ribosomal protein bL17 family. Part of the 50S ribosomal subunit. Contacts protein L32.

The protein is Large ribosomal subunit protein bL17 of Geobacillus sp. (strain WCH70).